Consider the following 122-residue polypeptide: Large ribosomal subunit protein uL14 (122 aa).

It belongs to the universal ribosomal protein uL14 family. Part of the 50S ribosomal subunit. Forms a cluster with proteins L3 and L19. In the 70S ribosome, L14 and L19 interact and together make contacts with the 16S rRNA in bridges B5 and B8.

Binds to 23S rRNA. Forms part of two intersubunit bridges in the 70S ribosome. This is Large ribosomal subunit protein uL14 from Chlorobium limicola (strain DSM 245 / NBRC 103803 / 6330).